The primary structure comprises 176 residues: Cytochrome b (176 aa).

3 consecutive transmembrane segments (helical) span residues 33–53 (FGSL…FLAM), 77–98 (WLIR…FLHV), and 113–133 (WNIG…GYVL). 2 residues coordinate heme b: H83 and H97.

This sequence belongs to the cytochrome b family. As to quaternary structure, the cytochrome bc1 complex contains 11 subunits: 3 respiratory subunits (MT-CYB, CYC1 and UQCRFS1), 2 core proteins (UQCRC1 and UQCRC2) and 6 low-molecular weight proteins (UQCRH/QCR6, UQCRB/QCR7, UQCRQ/QCR8, UQCR10/QCR9, UQCR11/QCR10 and a cleavage product of UQCRFS1). This cytochrome bc1 complex then forms a dimer. The cofactor is heme b.

It localises to the mitochondrion inner membrane. Its function is as follows. Component of the ubiquinol-cytochrome c reductase complex (complex III or cytochrome b-c1 complex) that is part of the mitochondrial respiratory chain. The b-c1 complex mediates electron transfer from ubiquinol to cytochrome c. Contributes to the generation of a proton gradient across the mitochondrial membrane that is then used for ATP synthesis. The polypeptide is Cytochrome b (MT-CYB) (Sciurus carolinensis (Eastern gray squirrel)).